We begin with the raw amino-acid sequence, 116 residues long: MMIEVLKSKLHCVRVTEANLNYMGSITIDEDLMDAANMIAGEKVHIVDNNNGERFETYIIKGERGSGCICLNGAAARKVQVGDIVIIMSYAMMDFEEAKSFKPTVVFPDSAMNKIV.

The active-site Schiff-base intermediate with substrate; via pyruvic acid is the S25. S25 is subject to Pyruvic acid (Ser). Residue T57 participates in substrate binding. Y58 (proton donor) is an active-site residue. A substrate-binding site is contributed by 73–75 (GAA).

Belongs to the PanD family. In terms of assembly, heterooctamer of four alpha and four beta subunits. Pyruvate serves as cofactor. Post-translationally, is synthesized initially as an inactive proenzyme, which is activated by self-cleavage at a specific serine bond to produce a beta-subunit with a hydroxyl group at its C-terminus and an alpha-subunit with a pyruvoyl group at its N-terminus.

It localises to the cytoplasm. The enzyme catalyses L-aspartate + H(+) = beta-alanine + CO2. It functions in the pathway cofactor biosynthesis; (R)-pantothenate biosynthesis; beta-alanine from L-aspartate: step 1/1. Functionally, catalyzes the pyruvoyl-dependent decarboxylation of aspartate to produce beta-alanine. The protein is Aspartate 1-decarboxylase of Phocaeicola vulgatus (strain ATCC 8482 / DSM 1447 / JCM 5826 / CCUG 4940 / NBRC 14291 / NCTC 11154) (Bacteroides vulgatus).